A 164-amino-acid chain; its full sequence is UPF0114 protein YqhA (164 aa).

A run of 3 helical transmembrane segments spans residues 15-35 (LLAP…LKFF), 53-73 (LILV…LVMV), and 136-156 (LMWY…MGYL).

The protein belongs to the UPF0114 family.

The protein resides in the cell membrane. The chain is UPF0114 protein YqhA from Escherichia coli O139:H28 (strain E24377A / ETEC).